The following is a 293-amino-acid chain: MPHGQPCGACDGSCRMAQRGTPSTSPLIPSLTPSPPAGDPSPRSSQRIDAVRVPARLPGGSDHPEYGMPLSPRALRPYLARGPGAFCAPPWRPDVNRLAGDVNRLFRGISTSSIHVTEDSRTLRRALLDFYAMGYTHTRPTLECWQSLLQLLPEQSFPLRATLRALNSEDRYEQRFLEPPSDPPNTLFGEECDVSGDESPSEEEEEDEASGESSVSEFSPEEETASSEYDSFSDVGEDDSSCTGKWSSSESESDSESDAPTNNHHPTTRASAAKKRRKRQPPKGERPTKSARR.

2 disordered regions span residues 1–49 (MPHG…QRID) and 175–293 (RFLE…SARR). Low complexity predominate over residues 21–31 (TPSTSPLIPSL). The span at 190-210 (EECDVSGDESPSEEEEEDEAS) shows a compositional bias: acidic residues. Basic residues predominate over residues 272–281 (AAKKRRKRQP). Over residues 282–293 (PKGERPTKSARR) the composition is skewed to basic and acidic residues.

Belongs to the herpesviridae ICP22 family.

The protein is Transcriptional regulator ICP22 homolog (IR4) of Equus caballus (Horse).